We begin with the raw amino-acid sequence, 73 residues long: MQKLIILLLVAAVLMSAQAVLQEKRPKEKIKFLSKRKTDAEKQQKRLCPDYTEPCSHAHECCSWNCYNGHCTG.

A signal peptide spans 1–19 (MQKLIILLLVAAVLMSAQA). Residues 20 to 44 (VLQEKRPKEKIKFLSKRKTDAEKQQ) constitute a propeptide that is removed on maturation. Intrachain disulfides connect C48/C62, C55/C66, and C61/C71. 4-hydroxyproline is present on P49. Residue E53 is modified to 4-carboxyglutamate; partial. The residue at position 54 (P54) is a 4-hydroxyproline. E60 carries the post-translational modification 4-carboxyglutamate. W64 carries the 6'-bromotryptophan modification.

It belongs to the conotoxin O2 superfamily. In terms of tissue distribution, expressed by the venom duct.

The protein localises to the secreted. The chain is Conotoxin Gla(3)-TxVI from Conus textile (Cloth-of-gold cone).